We begin with the raw amino-acid sequence, 501 residues long: Protein DETOXIFICATION 37 (501 aa).

The next 12 membrane-spanning stretches (helical) occupy residues 44–64 (MMIEMKFLFHLAAPAIFVYVI), 84–104 (LAAASLGNSGFNMFTYGLLLG), 134–154 (VVLILTCLPMSFLFLFSNPIL), 163–183 (VATLASVFVYGMIPVIFAYAV), 200–220 (SAYISAATLVIHLILSWIAVY), 222–242 (LGYGLLALSLIHSFSWWIIVV), 280–300 (AVMLCLESWYSQILVLLAGLL), 310–330 (LAICMSISAISFMVSVGFNAA), 352–372 (VVTTGVSFLLSVFEAIVVLSW), 396–416 (FLAITIVLNGIQPVLSGVAVG), 422–442 (FVAYVNIGCYYVVGIPVGFVL), and 453–473 (IWTGMIGGTLMQTIILVIVTL).

This sequence belongs to the multi antimicrobial extrusion (MATE) (TC 2.A.66.1) family.

It localises to the membrane. The chain is Protein DETOXIFICATION 37 from Arabidopsis thaliana (Mouse-ear cress).